The sequence spans 224 residues: MAICDWPEDERPREKLLQRGASALSDAELLAIFLRTGVAGCNAIELARNLLQEFGSLRALLGAEQAQFCQAHGLGPAKYVQLQAVLEMSNRYLSECLQRGDSLTSPQLVRRYLQAQLRDRPREVFAMLLLDNQHRVLRFCELFFGTIDAASVYPREIVQTVLKHNAAAVILCHNHPSGVAEPSHADRHITERICDALRLIDVRVLDHFVIGDGDPVSFAERGWL.

The region spanning 102-224 (SLTSPQLVRR…PVSFAERGWL (123 aa)) is the MPN domain. Residues H173, H175, and D186 each coordinate Zn(2+). Positions 173–186 (HNHPSGVAEPSHAD) match the JAMM motif motif.

Belongs to the UPF0758 family.

The sequence is that of UPF0758 protein Tola_0183 from Tolumonas auensis (strain DSM 9187 / NBRC 110442 / TA 4).